The sequence spans 256 residues: Undecaprenyl-diphosphatase (256 aa).

The next 8 helical transmembrane spans lie at 1 to 21 (MTIL…FLPI), 39 to 59 (NAIN…AVIF), 70 to 90 (IDLW…GFIF), 97 to 117 (LFSL…FLIV), 134 to 154 (AISL…LIPG), 176 to 196 (AEFS…YDLL), 205 to 225 (ANLI…YLSI), and 235 to 255 (FTFF…LLFF).

Belongs to the UppP family.

It localises to the cell inner membrane. It carries out the reaction di-trans,octa-cis-undecaprenyl diphosphate + H2O = di-trans,octa-cis-undecaprenyl phosphate + phosphate + H(+). Functionally, catalyzes the dephosphorylation of undecaprenyl diphosphate (UPP). Confers resistance to bacitracin. This chain is Undecaprenyl-diphosphatase, found in Sulfurimonas denitrificans (strain ATCC 33889 / DSM 1251) (Thiomicrospira denitrificans (strain ATCC 33889 / DSM 1251)).